The sequence spans 691 residues: DNA ligase (691 aa).

Residues 1-22 (MTTAEDVAGNPYISDPRTDFES) are disordered. Residues 59–63 (DRAYD), 107–108 (SI), and E137 each bind NAD(+). The N6-AMP-lysine intermediate role is filled by K139. NAD(+)-binding residues include R160, E196, K311, and K335. Positions 426, 429, 442, and 448 each coordinate Zn(2+). The region spanning 608-691 (TDGDALDGQT…EELLDDAGVL (84 aa)) is the BRCT domain. The disordered stretch occupies residues 637 to 667 (ERNDGSATSSVSGNTDYLVLGDNPGQRKQDD). A compositionally biased stretch (polar residues) spans 641–651 (GSATSSVSGNT).

Belongs to the NAD-dependent DNA ligase family. LigA subfamily. The cofactor is Mg(2+). Mn(2+) serves as cofactor.

It catalyses the reaction NAD(+) + (deoxyribonucleotide)n-3'-hydroxyl + 5'-phospho-(deoxyribonucleotide)m = (deoxyribonucleotide)n+m + AMP + beta-nicotinamide D-nucleotide.. Functionally, DNA ligase that catalyzes the formation of phosphodiester linkages between 5'-phosphoryl and 3'-hydroxyl groups in double-stranded DNA using NAD as a coenzyme and as the energy source for the reaction. It is essential for DNA replication and repair of damaged DNA. This chain is DNA ligase, found in Haloarcula marismortui (strain ATCC 43049 / DSM 3752 / JCM 8966 / VKM B-1809) (Halobacterium marismortui).